We begin with the raw amino-acid sequence, 242 residues long: Type III pantothenate kinase (242 aa).

An ATP-binding site is contributed by D7 to K14. Substrate contacts are provided by residues Y91 and G98–R101. D100 acts as the Proton acceptor in catalysis. ATP is bound at residue T121. T171 is a substrate binding site.

It belongs to the type III pantothenate kinase family. Homodimer. NH4(+) is required as a cofactor. It depends on K(+) as a cofactor.

It localises to the cytoplasm. It catalyses the reaction (R)-pantothenate + ATP = (R)-4'-phosphopantothenate + ADP + H(+). Its pathway is cofactor biosynthesis; coenzyme A biosynthesis; CoA from (R)-pantothenate: step 1/5. Functionally, catalyzes the phosphorylation of pantothenate (Pan), the first step in CoA biosynthesis. The sequence is that of Type III pantothenate kinase from Xylella fastidiosa (strain 9a5c).